The sequence spans 391 residues: Large ribosomal subunit protein uL3 (391 aa).

The span at 1–10 (MSHRKFEAPR) shows a compositional bias: basic and acidic residues. The disordered stretch occupies residues 1-41 (MSHRKFEAPRHGSLGFRPRRRTRHHRGRCRSFPKDDPSKKP). Basic residues predominate over residues 17–31 (RPRRRTRHHRGRCRS).

It belongs to the universal ribosomal protein uL3 family.

It localises to the cytoplasm. Its function is as follows. The L3 protein is a component of the large subunit of cytoplasmic ribosomes. The chain is Large ribosomal subunit protein uL3 (RPL3) from Tetrahymena thermophila.